Reading from the N-terminus, the 308-residue chain is Probable manganese-dependent inorganic pyrophosphatase (308 aa).

Mn(2+) contacts are provided by His9, Asp13, Asp15, Asp75, His97, and Asp149.

The protein belongs to the PPase class C family. The cofactor is Mn(2+).

The protein localises to the cytoplasm. The catalysed reaction is diphosphate + H2O = 2 phosphate + H(+). The sequence is that of Probable manganese-dependent inorganic pyrophosphatase from Listeria monocytogenes serotype 4b (strain CLIP80459).